A 213-amino-acid polypeptide reads, in one-letter code: MRKMMSTMALTLGAAVFLAFAAATAQAQRCGEQGSNMECPNNLCCSQYGYCGMGGDYCGKGCQNGACWTSKRCGSQAGGATCPNNHCCSQYGHCGFGAEYCGAGCQGGPCRADIKCGSQSGGKLCPNNLCCSQWGFCGLGSEFCGGGCQSGACSTDKPCGKDAGGRVCTNNYCCSKWGSCGIGPGYCGAGCQSGGCDAVFAGAITANSTLLAE.

Residues Met-1–Ala-27 form the signal peptide. Gln-28 is modified (pyrrolidone carboxylic acid). Chitin-binding type-1 domains lie at Gln-28–Thr-69, Ser-70–Ala-112, Asp-113–Thr-155, and Asp-156–Ala-198. Intrachain disulfides connect Cys-30-Cys-45, Cys-39-Cys-51, Cys-44-Cys-58, Cys-62-Cys-67, Cys-73-Cys-88, Cys-82-Cys-94, Cys-87-Cys-101, Cys-105-Cys-110, Cys-116-Cys-131, Cys-125-Cys-137, Cys-130-Cys-144, Cys-148-Cys-153, Cys-159-Cys-174, Cys-168-Cys-180, Cys-173-Cys-187, and Cys-191-Cys-196. Met-37–Cys-39 provides a ligand contact to substrate. Ser-89–Tyr-100 contributes to the substrate binding site. Ser-141–Glu-142 contributes to the substrate binding site. Residues Val-199 to Glu-213 constitute a propeptide that is removed on maturation.

As to quaternary structure, homodimer, u-shaped.

N-acetyl-D-glucosamine / N-acetyl-D-neuraminic acid binding lectin. The chain is Agglutinin isolectin 2 from Triticum aestivum (Wheat).